We begin with the raw amino-acid sequence, 752 residues long: MGFTLLIDNYDSFTWNIYADLASVGGNPYVVRNDKITLKEIEGMFSDGELERIVISPGPGHPRTDSGVSRDVIAWGMGKLPILGVCMGLECIVDLLGGEIAYAGEIKHGKTSLVQHDSIGVFHNLPQFLSSTRYHSLSAQIQSLPSVLQVTSTTKESGVIMGVRHRTYTVEAVQYHPESCMSEGGRGLMANFIQMKGGKWGGENAWCGVPAEGEEEQPKAKTNGAPSLPTILNRIHAQRLLDVEQAEKVPATSPANVSTSLSLYASPPLINFRDRMVSTPHTAVMAEIKRASPSKGDIAPTASAPEQALKYALAGASVISVLTEPTWFKGSLLDMLAVRNAVDSLPNRPAILRKDFVLSKYMIDEARLYGADTVLLIVAMLEPQQLKELYDYSVSLGMEPLVEVNNPTELSLALEIGSKVIGVNNRNLHDFNVDMSTTSRVNAALNGRDVVLCALSGISSHEDVEKYVKEGVKGVLVGEALMRASDTKAFLRSLIGLPPLEVVPKSRPLVKICGIRSTDDAKLAISAGADLLGVILVPGTKRCISTSTAREISALVQSARSQSSSKPLEPSLSSPWFTTQSDLLSSRRKPLLVGVFQNQSLSDILSAVEEIGLNLVQLHGDEPQAWAKFIPVPVVKVFRVSPEGIVRGGEIRRPGLNQAILLDAGGVSGGGGEGKAFPWEHAKRLIQSGEVGSEGHMPLPVILAGGLTPENVGQAIEQAGEGVWCVDVSSGVEGEGGKVKEKVEAFVKAVRG.

The 200-residue stretch at 3–202 (FTLLIDNYDS…IQMKGGKWGG (200 aa)) folds into the Glutamine amidotransferase type-1 domain. Position 58 to 60 (58 to 60 (GPG)) interacts with L-glutamine. The Nucleophile; for GATase activity role is filled by cysteine 86. 136–137 (SL) is an L-glutamine binding site. Residues histidine 176 and glutamate 178 each act as for GATase activity in the active site. An indole-3-glycerol phosphate synthase region spans residues 231-495 (ILNRIHAQRL…DTKAFLRSLI (265 aa)). The tract at residues 509–752 (LVKICGIRST…VEAFVKAVRG (244 aa)) is N-(5'-phosphoribosyl)anthranilate isomerase.

It carries out the reaction N-(5-phospho-beta-D-ribosyl)anthranilate = 1-(2-carboxyphenylamino)-1-deoxy-D-ribulose 5-phosphate. The enzyme catalyses 1-(2-carboxyphenylamino)-1-deoxy-D-ribulose 5-phosphate + H(+) = (1S,2R)-1-C-(indol-3-yl)glycerol 3-phosphate + CO2 + H2O. It catalyses the reaction chorismate + L-glutamine = anthranilate + pyruvate + L-glutamate + H(+). Its pathway is amino-acid biosynthesis; L-tryptophan biosynthesis; L-tryptophan from chorismate: step 1/5. It participates in amino-acid biosynthesis; L-tryptophan biosynthesis; L-tryptophan from chorismate: step 3/5. The protein operates within amino-acid biosynthesis; L-tryptophan biosynthesis; L-tryptophan from chorismate: step 4/5. Trifunctional enzyme bearing the Gln amidotransferase (GATase) domain of anthranilate synthase, indole-glycerolphosphate synthase, and phosphoribosylanthranilate isomerase activities. This is Multifunctional tryptophan biosynthesis protein (TRP1) from Cryptococcus neoformans var. neoformans serotype D (strain B-3501A) (Filobasidiella neoformans).